Here is a 316-residue protein sequence, read N- to C-terminus: tRNA uridine(34) hydroxylase (316 aa).

Positions 123–217 (LSDDTVVIDA…YGKDPETKGE (95 aa)) constitute a Rhodanese domain. Cys-177 acts as the Cysteine persulfide intermediate in catalysis.

The protein belongs to the TrhO family.

It catalyses the reaction uridine(34) in tRNA + AH2 + O2 = 5-hydroxyuridine(34) in tRNA + A + H2O. Functionally, catalyzes oxygen-dependent 5-hydroxyuridine (ho5U) modification at position 34 in tRNAs. The chain is tRNA uridine(34) hydroxylase from Staphylococcus saprophyticus subsp. saprophyticus (strain ATCC 15305 / DSM 20229 / NCIMB 8711 / NCTC 7292 / S-41).